A 142-amino-acid polypeptide reads, in one-letter code: Large ribosomal subunit protein uL11 (142 aa).

It belongs to the universal ribosomal protein uL11 family. Part of the ribosomal stalk of the 50S ribosomal subunit. Interacts with L10 and the large rRNA to form the base of the stalk. L10 forms an elongated spine to which L12 dimers bind in a sequential fashion forming a multimeric L10(L12)X complex. In terms of processing, one or more lysine residues are methylated.

Functionally, forms part of the ribosomal stalk which helps the ribosome interact with GTP-bound translation factors. This chain is Large ribosomal subunit protein uL11, found in Yersinia pestis bv. Antiqua (strain Angola).